The following is a 914-amino-acid chain: Protein translocase subunit SecA (914 aa).

Residues Q86, 104–108, and D512 contribute to the ATP site; that span reads GEGKT. The Zn(2+) site is built by C898, C900, C909, and H910.

The protein belongs to the SecA family. As to quaternary structure, monomer and homodimer. Part of the essential Sec protein translocation apparatus which comprises SecA, SecYEG and auxiliary proteins SecDF-YajC and YidC. Zn(2+) serves as cofactor.

Its subcellular location is the cell inner membrane. The protein resides in the cytoplasm. The catalysed reaction is ATP + H2O + cellular proteinSide 1 = ADP + phosphate + cellular proteinSide 2.. Functionally, part of the Sec protein translocase complex. Interacts with the SecYEG preprotein conducting channel. Has a central role in coupling the hydrolysis of ATP to the transfer of proteins into and across the cell membrane, serving both as a receptor for the preprotein-SecB complex and as an ATP-driven molecular motor driving the stepwise translocation of polypeptide chains across the membrane. The sequence is that of Protein translocase subunit SecA from Bordetella petrii (strain ATCC BAA-461 / DSM 12804 / CCUG 43448).